A 281-amino-acid polypeptide reads, in one-letter code: 2-dehydro-3-deoxyphosphooctonate aldolase (281 aa).

It belongs to the KdsA family.

Its subcellular location is the cytoplasm. The catalysed reaction is D-arabinose 5-phosphate + phosphoenolpyruvate + H2O = 3-deoxy-alpha-D-manno-2-octulosonate-8-phosphate + phosphate. It participates in carbohydrate biosynthesis; 3-deoxy-D-manno-octulosonate biosynthesis; 3-deoxy-D-manno-octulosonate from D-ribulose 5-phosphate: step 2/3. The protein operates within bacterial outer membrane biogenesis; lipopolysaccharide biosynthesis. The chain is 2-dehydro-3-deoxyphosphooctonate aldolase from Janthinobacterium sp. (strain Marseille) (Minibacterium massiliensis).